The sequence spans 135 residues: Ribosome-binding factor A (135 aa).

This sequence belongs to the RbfA family. As to quaternary structure, monomer. Binds 30S ribosomal subunits, but not 50S ribosomal subunits or 70S ribosomes.

Its subcellular location is the cytoplasm. Functionally, one of several proteins that assist in the late maturation steps of the functional core of the 30S ribosomal subunit. Associates with free 30S ribosomal subunits (but not with 30S subunits that are part of 70S ribosomes or polysomes). Required for efficient processing of 16S rRNA. May interact with the 5'-terminal helix region of 16S rRNA. This Methylobacterium nodulans (strain LMG 21967 / CNCM I-2342 / ORS 2060) protein is Ribosome-binding factor A.